Here is a 423-residue protein sequence, read N- to C-terminus: SH2 domain-containing adapter protein F (423 aa).

Disordered stretches follow at residues 1–87 (MQQE…STTR), 110–208 (DPFD…WEWK), and 225–312 (DLPW…GEWT). A compositionally biased stretch (acidic residues) spans 192–203 (EDDERPPEEYDQ). Position 201 is a phosphotyrosine (Tyr201). The 96-residue stretch at 323 to 418 (WYHGAISRTD…AEHMSLLYPV (96 aa)) folds into the SH2 domain.

Interacts with phosphorylated 'Tyr-720' of PDGFRA via its SH2 domain. May become phosphorylated upon binding to PDGFRA. In terms of tissue distribution, expressed in skeletal muscle, brain, liver, prostate, testis, ovary, small intestine and colon.

In terms of biological role, adapter protein which may play a role in the regulation of apoptosis in response to PDGF. The protein is SH2 domain-containing adapter protein F of Homo sapiens (Human).